The following is a 103-amino-acid chain: Pyrimidine/purine nucleoside phosphorylase (103 aa).

This sequence belongs to the nucleoside phosphorylase PpnP family.

It carries out the reaction a purine D-ribonucleoside + phosphate = a purine nucleobase + alpha-D-ribose 1-phosphate. It catalyses the reaction adenosine + phosphate = alpha-D-ribose 1-phosphate + adenine. The catalysed reaction is cytidine + phosphate = cytosine + alpha-D-ribose 1-phosphate. The enzyme catalyses guanosine + phosphate = alpha-D-ribose 1-phosphate + guanine. It carries out the reaction inosine + phosphate = alpha-D-ribose 1-phosphate + hypoxanthine. It catalyses the reaction thymidine + phosphate = 2-deoxy-alpha-D-ribose 1-phosphate + thymine. The catalysed reaction is uridine + phosphate = alpha-D-ribose 1-phosphate + uracil. The enzyme catalyses xanthosine + phosphate = alpha-D-ribose 1-phosphate + xanthine. Its function is as follows. Catalyzes the phosphorolysis of diverse nucleosides, yielding D-ribose 1-phosphate and the respective free bases. Can use uridine, adenosine, guanosine, cytidine, thymidine, inosine and xanthosine as substrates. Also catalyzes the reverse reactions. This Geobacter sp. (strain M21) protein is Pyrimidine/purine nucleoside phosphorylase.